We begin with the raw amino-acid sequence, 197 residues long: Large ribosomal subunit protein eL15 (197 aa).

Basic residues-rich tracts occupy residues 70 to 90 (PKGG…RMGK), 163 to 179 (RGKT…RKRG), and 187 to 197 (PSLRAHRRRGK). Disordered regions lie at residues 70-99 (PKGG…GKSK) and 163-197 (RGKT…RRGK).

This sequence belongs to the eukaryotic ribosomal protein eL15 family.

The sequence is that of Large ribosomal subunit protein eL15 from Methanopyrus kandleri (strain AV19 / DSM 6324 / JCM 9639 / NBRC 100938).